The following is a 398-amino-acid chain: Acetate kinase (398 aa).

Asparagine 7 serves as a coordination point for Mg(2+). Residue lysine 14 participates in ATP binding. Arginine 91 is a substrate binding site. Aspartate 148 functions as the Proton donor/acceptor in the catalytic mechanism. ATP-binding positions include 208–212, 283–285, and 331–335; these read HLGNG, DFR, and GIGEH. Glutamate 386 serves as a coordination point for Mg(2+).

Belongs to the acetokinase family. In terms of assembly, homodimer. The cofactor is Mg(2+). Mn(2+) is required as a cofactor.

Its subcellular location is the cytoplasm. It catalyses the reaction acetate + ATP = acetyl phosphate + ADP. It participates in metabolic intermediate biosynthesis; acetyl-CoA biosynthesis; acetyl-CoA from acetate: step 1/2. Its function is as follows. Catalyzes the formation of acetyl phosphate from acetate and ATP. Can also catalyze the reverse reaction. The chain is Acetate kinase from Clostridium botulinum (strain Eklund 17B / Type B).